The chain runs to 100 residues: NADH-quinone oxidoreductase subunit K (100 aa).

The next 3 membrane-spanning stretches (helical) occupy residues 1–21, 28–48, and 64–84; these read MIGL…GLAG, ILLL…GFIA, and FIIA…ILWF.

It belongs to the complex I subunit 4L family. In terms of assembly, NDH-1 is composed of 14 different subunits. Subunits NuoA, H, J, K, L, M, N constitute the membrane sector of the complex.

It is found in the cell inner membrane. The enzyme catalyses a quinone + NADH + 5 H(+)(in) = a quinol + NAD(+) + 4 H(+)(out). In terms of biological role, NDH-1 shuttles electrons from NADH, via FMN and iron-sulfur (Fe-S) centers, to quinones in the respiratory chain. The immediate electron acceptor for the enzyme in this species is believed to be ubiquinone. Couples the redox reaction to proton translocation (for every two electrons transferred, four hydrogen ions are translocated across the cytoplasmic membrane), and thus conserves the redox energy in a proton gradient. In Helicobacter pylori (strain G27), this protein is NADH-quinone oxidoreductase subunit K.